The chain runs to 377 residues: 23S rRNA (uracil(747)-C(5))-methyltransferase RlmC (377 aa).

Residues Cys-3, Cys-11, Cys-14, and Cys-87 each coordinate [4Fe-4S] cluster. Residues Gln-212, Phe-241, Glu-262, and Asn-307 each contribute to the S-adenosyl-L-methionine site. Cys-334 serves as the catalytic Nucleophile.

It belongs to the class I-like SAM-binding methyltransferase superfamily. RNA M5U methyltransferase family. RlmC subfamily.

The catalysed reaction is uridine(747) in 23S rRNA + S-adenosyl-L-methionine = 5-methyluridine(747) in 23S rRNA + S-adenosyl-L-homocysteine + H(+). Catalyzes the formation of 5-methyl-uridine at position 747 (m5U747) in 23S rRNA. The chain is 23S rRNA (uracil(747)-C(5))-methyltransferase RlmC from Edwardsiella ictaluri (strain 93-146).